Reading from the N-terminus, the 29-residue chain is U-limacoditoxin(12)-Dv72 (29 aa).

Residues 1–15 form the signal peptide; the sequence is MNFGMLKLLTVLIIC. The residue at position 27 (N27) is an Asparagine amide.

Belongs to the limacoditoxin-12 family. As to expression, expressed by the venom secretory cell of the spine. The spine is a cuticular structure containing a single large nucleated venom-secreting cell at its base. It is an independent unit capable of producing, storing and injecting venom. On the back of D.vulnerans caterpillars, spines are grouped together by 50 to 100 to form scoli, of which there are eight in D.vulnerans.

Its subcellular location is the secreted. Its function is as follows. Probable toxin. Does not show insecticidal, antimicrobial and antiparasitic activities. Does not induce increase in intracellular calcium in mouse DRG neurons, suggesting that it does not induce pain. This is U-limacoditoxin(12)-Dv72 from Doratifera vulnerans (Mottled cup moth).